A 215-amino-acid chain; its full sequence is Pyridoxine/pyridoxamine 5'-phosphate oxidase (215 aa).

Residues 9-12 (RRDY) and lysine 69 each bind substrate. FMN-binding positions include 64–69 (RVLLLK), 79–80 (FT), lysine 86, and glutamine 108. Substrate-binding residues include tyrosine 126, arginine 130, and serine 134. Residues 143–144 (QS) and tryptophan 188 contribute to the FMN site. 194-196 (RLH) provides a ligand contact to substrate. Arginine 198 contacts FMN.

This sequence belongs to the pyridoxamine 5'-phosphate oxidase family. Homodimer. FMN is required as a cofactor.

The catalysed reaction is pyridoxamine 5'-phosphate + O2 + H2O = pyridoxal 5'-phosphate + H2O2 + NH4(+). It carries out the reaction pyridoxine 5'-phosphate + O2 = pyridoxal 5'-phosphate + H2O2. Its pathway is cofactor metabolism; pyridoxal 5'-phosphate salvage; pyridoxal 5'-phosphate from pyridoxamine 5'-phosphate: step 1/1. It participates in cofactor metabolism; pyridoxal 5'-phosphate salvage; pyridoxal 5'-phosphate from pyridoxine 5'-phosphate: step 1/1. In terms of biological role, catalyzes the oxidation of either pyridoxine 5'-phosphate (PNP) or pyridoxamine 5'-phosphate (PMP) into pyridoxal 5'-phosphate (PLP). In Pseudomonas putida (strain GB-1), this protein is Pyridoxine/pyridoxamine 5'-phosphate oxidase.